Consider the following 235-residue polypeptide: Aspartate/glutamate leucyltransferase (235 aa).

This sequence belongs to the R-transferase family. Bpt subfamily.

It is found in the cytoplasm. The enzyme catalyses N-terminal L-glutamyl-[protein] + L-leucyl-tRNA(Leu) = N-terminal L-leucyl-L-glutamyl-[protein] + tRNA(Leu) + H(+). It carries out the reaction N-terminal L-aspartyl-[protein] + L-leucyl-tRNA(Leu) = N-terminal L-leucyl-L-aspartyl-[protein] + tRNA(Leu) + H(+). Functions in the N-end rule pathway of protein degradation where it conjugates Leu from its aminoacyl-tRNA to the N-termini of proteins containing an N-terminal aspartate or glutamate. The polypeptide is Aspartate/glutamate leucyltransferase (Pseudomonas syringae pv. tomato (strain ATCC BAA-871 / DC3000)).